The chain runs to 1180 residues: Neurexin like receptor 1 (1180 aa).

Residues 1–20 (MSGLCLVLLLSIFAVSQSSG) form the signal peptide. Over 21 to 1108 (ECSDVSFSSV…SQNKQDLVSK (1088 aa)) the chain is Extracellular. The 167-residue stretch at 124 to 290 (PITAFDDSSY…LSPNEVHNQC (167 aa)) folds into the Laminin G-like 1 domain. An N-linked (GlcNAc...) asparagine glycan is attached at asparagine 229. The cysteines at positions 267 and 290 are disulfide-linked. 4 N-linked (GlcNAc...) asparagine glycosylation sites follow: asparagine 302, asparagine 336, asparagine 355, and asparagine 436. Residues 444–481 (FQEKCLPNPCENGGGCVQSALDDYVCNCKEGYKGKNCH) enclose the EGF-like 1 domain. Cystine bridges form between cysteine 448–cysteine 459, cysteine 453–cysteine 469, and cysteine 471–cysteine 480. Asparagine 522 and asparagine 636 each carry an N-linked (GlcNAc...) asparagine glycan. The 169-residue stretch at 695–863 (TFDPVTFSNR…GVAIGDDGYC (169 aa)) folds into the Laminin G-like 2 domain. The EGF-like 2 domain occupies 859–896 (DDGYCRPDLCQNGGQCVDKYDGYVCDCSMTPFGGSDCT). Cystine bridges form between cysteine 863–cysteine 874, cysteine 868–cysteine 883, and cysteine 885–cysteine 895. 6 N-linked (GlcNAc...) asparagine glycosylation sites follow: asparagine 933, asparagine 949, asparagine 978, asparagine 997, asparagine 1011, and asparagine 1052. The chain crosses the membrane as a helical span at residues 1109–1129 (AIIGGGILALSLFILCMSSLI). The Cytoplasmic segment spans residues 1130–1180 (CYMRSRPEGVYKTNETGENCSPSRSEEPLVHNTTSNNNNNPTYASNKEYFC). A compositionally biased stretch (polar residues) spans 1142–1152 (TNETGENCSPS). Residues 1142–1180 (TNETGENCSPSRSEEPLVHNTTSNNNNNPTYASNKEYFC) are disordered. Low complexity predominate over residues 1161–1171 (NTTSNNNNNPT).

Belongs to the neurexin family. In terms of assembly, interacts (via the intracellular domain) with F-actin; the interaction is required for anchoring F-actin at the membrane for gap junction formation. As to expression, highly expressed in pharyngeal g1 and g2 gland cells, pharyngeal muscle cells and the unilateral GABAergic RIS interneuron (at protein level). Expressed in pm5 pharyngeal muscle cells and the nerve ring.

The protein resides in the cell membrane. Its subcellular location is the cell junction. It is found in the gap junction. In terms of biological role, required for gap junction formation, playing a role in anchoring the cytoskeletal component F-actin to the membrane of adjacent cells and thus facilitating the formation of gap junction channels in embryonic cells, muscle cells and neuronal cells. Plays a role in maintaining gap junction activity to promote pharyngeal muscle contraction. This Caenorhabditis elegans protein is Neurexin like receptor 1.